The following is a 304-amino-acid chain: Ribosomal RNA small subunit methyltransferase H (304 aa).

S-adenosyl-L-methionine contacts are provided by residues 37-39 (AGH), aspartate 57, phenylalanine 79, aspartate 100, and histidine 107.

This sequence belongs to the methyltransferase superfamily. RsmH family.

Its subcellular location is the cytoplasm. It catalyses the reaction cytidine(1402) in 16S rRNA + S-adenosyl-L-methionine = N(4)-methylcytidine(1402) in 16S rRNA + S-adenosyl-L-homocysteine + H(+). In terms of biological role, specifically methylates the N4 position of cytidine in position 1402 (C1402) of 16S rRNA. This is Ribosomal RNA small subunit methyltransferase H from Bacteroides thetaiotaomicron (strain ATCC 29148 / DSM 2079 / JCM 5827 / CCUG 10774 / NCTC 10582 / VPI-5482 / E50).